Reading from the N-terminus, the 358-residue chain is MDLVRGLWRKHRRKILVTTTCLGSGYLLYKLYNAHTRKLADLERELANERENDEIIKTQMKAHFDNIQMIADTTTLPHAIHHLSSRVVEEIDVSSIMDKLSKGKGILIPSEKLQLWNELKILSFTRMVLSLWSVTMLSLYIRVQVNILGRHLYIDTARGLGSSHLLDELDLIERDDEQKFLTSADFLATSGMPSLISNMQNAVKEVLKGKQLKDVLTTSALRETVMRILDVFMSTGSPHHWVDYLMMSQDATTDVSSSDATVTKFHLLITETREVLTSNDFSNVAEISLKCCAVALVEEMETQTGLATGMQLAKLLPQIEKTMPEISAEPEKNRFLQLIRDLPEVKLFFTLLYANMPQ.

A helical transmembrane segment spans residues 15–32 (ILVTTTCLGSGYLLYKLY). Residues 33-62 (NAHTRKLADLERELANERENDEIIKTQMKA) adopt a coiled-coil conformation.

Belongs to the peroxin-3 family.

The protein resides in the peroxisome membrane. Functionally, involved in morphology determination of peroxisomes, but not in import of peroxisomal matrix proteins. May act as a docking factor for PEX19 and be necessary for the import of peroxisomal membrane proteins in the peroxisomes. This is Peroxisome biogenesis protein 3-1 (PEX3-1) from Arabidopsis thaliana (Mouse-ear cress).